We begin with the raw amino-acid sequence, 501 residues long: Glycerol kinase (501 aa).

An ADP-binding site is contributed by T12. Positions 12, 13, and 14 each coordinate ATP. T12 serves as a coordination point for sn-glycerol 3-phosphate. R16 contributes to the ADP binding site. R82, E83, Y134, and D244 together coordinate sn-glycerol 3-phosphate. 5 residues coordinate glycerol: R82, E83, Y134, D244, and Q245. Residues T266 and G310 each contribute to the ADP site. ATP contacts are provided by T266, G310, Q314, and G411. 2 residues coordinate ADP: G411 and N415.

It belongs to the FGGY kinase family.

It catalyses the reaction glycerol + ATP = sn-glycerol 3-phosphate + ADP + H(+). It participates in polyol metabolism; glycerol degradation via glycerol kinase pathway; sn-glycerol 3-phosphate from glycerol: step 1/1. With respect to regulation, inhibited by fructose 1,6-bisphosphate (FBP). Its function is as follows. Key enzyme in the regulation of glycerol uptake and metabolism. Catalyzes the phosphorylation of glycerol to yield sn-glycerol 3-phosphate. The sequence is that of Glycerol kinase from Methylorubrum extorquens (strain PA1) (Methylobacterium extorquens).